Reading from the N-terminus, the 83-residue chain is Mu-theraphotoxin-Hhn2i (83 aa).

Residues 1 to 21 (MKASMFLALAGLVLLFVVGYA) form the signal peptide. Positions 22–48 (SESEEKEFPRELLSKIFAVDDFKGEER) are excised as a propeptide. Disulfide bonds link cysteine 50-cysteine 65, cysteine 57-cysteine 70, and cysteine 64-cysteine 77. The residue at position 81 (leucine 81) is a Leucine amide.

This sequence belongs to the neurotoxin 10 (Hwtx-1) family. 15 (Hntx-3) subfamily. As to quaternary structure, monomer. Expressed by the venom gland.

It localises to the secreted. Lethal neurotoxin. Selectively blocks tetrodotoxin-sensitive voltage-gated sodium channels (Nav). Does not affect tetrodotoxin-resistant voltage-gated sodium channels or calcium channels. This is Mu-theraphotoxin-Hhn2i from Cyriopagopus hainanus (Chinese bird spider).